The following is a 520-amino-acid chain: Glucose starvation modulator protein 1 (520 aa).

The segment at residues 20–48 is a DNA-binding region (zn(2)-C6 fungal-type); it reads CVFCHEKHLQCSNERPCKNCVKRGLAHEC. Residues 376–445 enclose the PAS domain; that stretch reads DYEKLSQLNS…FRLFKTVAVG (70 aa).

It belongs to the ERT1/acuK family.

Its subcellular location is the nucleus. In terms of biological role, transcription factor which regulates nonfermentable carbon utilization. This is Glucose starvation modulator protein 1 (GSM1) from Scheffersomyces stipitis (strain ATCC 58785 / CBS 6054 / NBRC 10063 / NRRL Y-11545) (Yeast).